The sequence spans 196 residues: Pyridoxal 5'-phosphate synthase subunit PdxT (196 aa).

47–49 (GES) contributes to the L-glutamine binding site. The active-site Nucleophile is the C79. L-glutamine-binding positions include R106 and 134–135 (IR). Active-site charge relay system residues include H170 and E172.

The protein belongs to the glutaminase PdxT/SNO family. As to quaternary structure, in the presence of PdxS, forms a dodecamer of heterodimers. Only shows activity in the heterodimer.

The catalysed reaction is aldehydo-D-ribose 5-phosphate + D-glyceraldehyde 3-phosphate + L-glutamine = pyridoxal 5'-phosphate + L-glutamate + phosphate + 3 H2O + H(+). It catalyses the reaction L-glutamine + H2O = L-glutamate + NH4(+). It functions in the pathway cofactor biosynthesis; pyridoxal 5'-phosphate biosynthesis. Catalyzes the hydrolysis of glutamine to glutamate and ammonia as part of the biosynthesis of pyridoxal 5'-phosphate. The resulting ammonia molecule is channeled to the active site of PdxS. This is Pyridoxal 5'-phosphate synthase subunit PdxT from Bacillus subtilis (strain 168).